A 469-amino-acid polypeptide reads, in one-letter code: Tetratricopeptide repeat protein 38 (469 aa).

Alanine 2 carries the post-translational modification N-acetylalanine. Serine 5 carries the phosphoserine modification. TPR repeat units lie at residues 108–141, 180–213, and 252–285; these read REQL…HPTD, SYVK…NPTD, and CHNY…SLQA.

It belongs to the TTC38 family.

This chain is Tetratricopeptide repeat protein 38 (TTC38), found in Homo sapiens (Human).